A 345-amino-acid polypeptide reads, in one-letter code: 4-hydroxyproline 2-epimerase 1 (345 aa).

Residue Gln85 coordinates substrate. The Proton acceptor role is filled by Ser93. Substrate is bound by residues 94–95 and Asp251; that span reads GS. The active-site Proton donor is Cys255. Substrate is bound at residue 256–257; that stretch reads GT.

The protein belongs to the proline racemase family.

It catalyses the reaction trans-4-hydroxy-L-proline = cis-4-hydroxy-D-proline. Functionally, catalyzes the epimerization of trans-4-hydroxy-L-proline (t4LHyp) to cis-4-hydroxy-D-proline (c4DHyp). May be involved in a degradation pathway of t4LHyp. Can also catalyze the epimerization of trans-3-hydroxy-L-proline (t3LHyp) to cis-3-hydroxy-D-proline (c3DHyp) in vitro. Displays no proline racemase activity. This Rhizobium rhizogenes (strain K84 / ATCC BAA-868) (Agrobacterium radiobacter) protein is 4-hydroxyproline 2-epimerase 1.